The chain runs to 205 residues: Beta-crystallin B2 (205 aa).

N-acetylalanine is present on alanine 2. The segment at 2 to 16 is N-terminal arm; it reads ASDHQTQAGKPQSLN. Beta/gamma crystallin 'Greek key' domains are found at residues 17-56 and 57-101; these read PKII…LVQA and GPWV…RPIK. The segment at 102-106 is connecting peptide; sequence VDSQE. Beta/gamma crystallin 'Greek key' domains are found at residues 107 to 148 and 149 to 191; these read HKII…RVQS and GTWV…RRIR. Positions 193–205 are C-terminal arm; it reads MQWHQRGAFHPSN.

Belongs to the beta/gamma-crystallin family. In terms of assembly, homo/heterodimer, or complexes of higher-order. The structure of beta-crystallin oligomers seems to be stabilized through interactions between the N-terminal arms.

In terms of biological role, crystallins are the dominant structural components of the vertebrate eye lens. The polypeptide is Beta-crystallin B2 (CRYBB2) (Homo sapiens (Human)).